We begin with the raw amino-acid sequence, 355 residues long: dTDP-D-glucose 4,6-dehydratase (355 aa).

Threonine 142 provides a ligand contact to substrate. Residue aspartate 143 is the Proton donor of the active site. Active-site proton acceptor residues include glutamate 144 and tyrosine 166.

This sequence belongs to the NAD(P)-dependent epimerase/dehydratase family. dTDP-glucose dehydratase subfamily. NAD(+) is required as a cofactor.

It carries out the reaction dTDP-alpha-D-glucose = dTDP-4-dehydro-6-deoxy-alpha-D-glucose + H2O. The sequence is that of dTDP-D-glucose 4,6-dehydratase (TGDS) from Bos taurus (Bovine).